A 572-amino-acid polypeptide reads, in one-letter code: Far upstream element-binding protein 3 (572 aa).

The residue at position 2 (Ala-2) is an N-acetylalanine. Residues Lys-15 and Lys-57 each participate in a glycyl lysine isopeptide (Lys-Gly) (interchain with G-Cter in SUMO2) cross-link. Thr-76 is subject to Phosphothreonine. 4 KH domains span residues 77–141, 162–228, 253–317, and 354–421; these read VITE…KRLL, STIQ…REMV, GGSI…AHII, and VQEI…RQLI. The residue at position 296 (Ser-296) is a Phosphoserine. The disordered stretch occupies residues 426–521; that stretch reads GGTNLGAPGA…SQPNYSKAWE (96 aa). Low complexity predominate over residues 496–514; that stretch reads QQPTQQVPSQQSQPQSSQP. Residues Ser-539 and Ser-569 each carry the phosphoserine modification.

Detected in a number of cell lines.

It localises to the nucleus. May interact with single-stranded DNA from the far-upstream element (FUSE). May activate gene expression. In Homo sapiens (Human), this protein is Far upstream element-binding protein 3 (FUBP3).